Reading from the N-terminus, the 92-residue chain is Islet amyloid polypeptide (92 aa).

An N-terminal signal peptide occupies residues 1–22 (MHISKLPAALLIFSVALNHLKA). A propeptide spanning residues 23–34 (TPVRSGTNHQMD) is cleaved from the precursor. Cysteines 38 and 43 form a disulfide. Residue Tyr-73 is modified to Tyrosine amide. The propeptide occupies 77–92 (SAAEIPDGDSLDLFLL).

It belongs to the calcitonin family. Can form homodimers. Interacts with IDE and INS. Interaction with INS inhibits homodimerization and fibril formation.

It localises to the secreted. Functionally, amylin/IAPP is a glucoregulatory peptide hormone that plays an important role in the regulation of energy homeostasis. Selectively inhibits insulin-stimulated glucose utilization and glycogen deposition in muscle, while not affecting adipocyte glucose metabolism. IAPP function is mediated by the CALCR-RAMPs (AMYRs) receptor complexes. Amylin can also bind CALCR receptor in the absence of RAMPs, although it is more selective for AMYRs. The protein is Islet amyloid polypeptide (IAPP) of Mesocricetus auratus (Golden hamster).